Reading from the N-terminus, the 326-residue chain is D-alanine--D-alanine ligase (326 aa).

An ATP-grasp domain is found at Lys-112 to Ala-312. Position 138 to 193 (Leu-138 to Thr-193) interacts with ATP. Residues Asp-265, Glu-279, and Asn-281 each coordinate Mg(2+).

Belongs to the D-alanine--D-alanine ligase family. It depends on Mg(2+) as a cofactor. Mn(2+) serves as cofactor.

The protein resides in the cytoplasm. The catalysed reaction is 2 D-alanine + ATP = D-alanyl-D-alanine + ADP + phosphate + H(+). Its pathway is cell wall biogenesis; peptidoglycan biosynthesis. Cell wall formation. In Delftia acidovorans (strain DSM 14801 / SPH-1), this protein is D-alanine--D-alanine ligase.